We begin with the raw amino-acid sequence, 610 residues long: Oxidoreductase ptaE (610 aa).

A signal peptide spans 1 to 20 (MFQSILFLAFYGRPVFGSAA). 2 consecutive Plastocyanin-like domains span residues 67–181 (QIIS…HGPS) and 191–344 (PWLL…IVRY). N-linked (GlcNAc...) asparagine glycosylation is found at Asn-105, Asn-111, Asn-262, Asn-277, Asn-330, Asn-356, Asn-401, Asn-409, Asn-427, and Asn-602. The region spanning 425–568 (YVNWSEPSVK…IAIQFLEQPS (144 aa)) is the Plastocyanin-like 3 domain.

Belongs to the multicopper oxidase family.

It functions in the pathway secondary metabolite biosynthesis. Functionally, oxidoreductase; part of the gene cluster that mediates the biosynthesis of pestheic acid, a diphenyl ether which is a biosynthetic precursor of the unique chloropupukeananes. The biosynthesis initiates from condensation of acetate and malonate units catalyzed by the non-reducing PKS ptaA. As the ptaA protein is TE/CLC domain-deficient, hydrolysis and Claisen cyclization of the polyketide could be catalyzed by ptaB containing a beta-lactamase domain. The ptaB protein might hydrolyze the thioester bond between the ACP of ptaA and the intermediate to release atrochrysone carboxylic acid, which is spontaneously dehydrated to form endocrocin anthrone. Endocrocin anthrone is then converted to endocrocin, catalyzed by the anthrone oxygenase ptaC. Spontaneous decarboxylation of endocrocin occurs to generate emodin. An O-methyltransferase (ptaH or ptaI) could methylate emodin to form physcion. PtaJ could then catalyze the oxidative cleavage of physcion, and rotation of the intermediate could then afford desmethylisosulochrin. PtaF, a putative NADH-dependent oxidoreductase, might also participate in the oxidative cleavage step. Desmethylisosulochrin is then transformed by another O-methyltransferase (ptaH or ptaI) to form isosulochrin. Chlorination of isosulochrin by ptaM in the cyclohexadienone B ring then produces chloroisosulochrin. PtaE is responsible for the oxidative coupling reactions of both benzophenones isosulouchrin and chloroisosulochrin to RES-1214-1 and pestheic acid respectively, regardless of chlorination. The chain is Oxidoreductase ptaE from Pestalotiopsis fici (strain W106-1 / CGMCC3.15140).